The following is a 347-amino-acid chain: Protein RecA (347 aa).

An ATP-binding site is contributed by 67 to 74; the sequence is GPESSGKT.

This sequence belongs to the RecA family.

It localises to the cytoplasm. Its function is as follows. Can catalyze the hydrolysis of ATP in the presence of single-stranded DNA, the ATP-dependent uptake of single-stranded DNA by duplex DNA, and the ATP-dependent hybridization of homologous single-stranded DNAs. It interacts with LexA causing its activation and leading to its autocatalytic cleavage. This is Protein RecA from Helicobacter pylori (strain HPAG1).